Reading from the N-terminus, the 308-residue chain is Ribosomal RNA small subunit methyltransferase H (308 aa).

S-adenosyl-L-methionine-binding positions include 36–38 (GGH), Asp-55, Phe-86, Asp-103, and Gln-110.

This sequence belongs to the methyltransferase superfamily. RsmH family.

It is found in the cytoplasm. The catalysed reaction is cytidine(1402) in 16S rRNA + S-adenosyl-L-methionine = N(4)-methylcytidine(1402) in 16S rRNA + S-adenosyl-L-homocysteine + H(+). Functionally, specifically methylates the N4 position of cytidine in position 1402 (C1402) of 16S rRNA. This is Ribosomal RNA small subunit methyltransferase H from Helicobacter pylori (strain HPAG1).